A 308-amino-acid chain; its full sequence is Bifunctional protein FolD (308 aa).

Position 170–172 (170–172 (GKG)) interacts with NADP(+).

It belongs to the tetrahydrofolate dehydrogenase/cyclohydrolase family. As to quaternary structure, homodimer.

The enzyme catalyses (6R)-5,10-methylene-5,6,7,8-tetrahydrofolate + NADP(+) = (6R)-5,10-methenyltetrahydrofolate + NADPH. It carries out the reaction (6R)-5,10-methenyltetrahydrofolate + H2O = (6R)-10-formyltetrahydrofolate + H(+). Its pathway is one-carbon metabolism; tetrahydrofolate interconversion. Its function is as follows. Catalyzes the oxidation of 5,10-methylenetetrahydrofolate to 5,10-methenyltetrahydrofolate and then the hydrolysis of 5,10-methenyltetrahydrofolate to 10-formyltetrahydrofolate. The protein is Bifunctional protein FolD of Pyrobaculum calidifontis (strain DSM 21063 / JCM 11548 / VA1).